Reading from the N-terminus, the 423-residue chain is Imidazolonepropionase (423 aa).

Fe(3+) is bound by residues His-87 and His-89. His-87 and His-89 together coordinate Zn(2+). The 4-imidazolone-5-propanoate site is built by Arg-96, Tyr-159, and His-192. Residue Tyr-159 coordinates N-formimidoyl-L-glutamate. His-257 serves as a coordination point for Fe(3+). His-257 lines the Zn(2+) pocket. Glu-260 provides a ligand contact to 4-imidazolone-5-propanoate. Asp-331 lines the Fe(3+) pocket. Asp-331 provides a ligand contact to Zn(2+). N-formimidoyl-L-glutamate-binding residues include Asn-333 and Gly-335. Ser-336 contacts 4-imidazolone-5-propanoate.

The protein belongs to the metallo-dependent hydrolases superfamily. HutI family. The cofactor is Zn(2+). Requires Fe(3+) as cofactor.

It localises to the cytoplasm. It carries out the reaction 4-imidazolone-5-propanoate + H2O = N-formimidoyl-L-glutamate. The protein operates within amino-acid degradation; L-histidine degradation into L-glutamate; N-formimidoyl-L-glutamate from L-histidine: step 3/3. In terms of biological role, catalyzes the hydrolytic cleavage of the carbon-nitrogen bond in imidazolone-5-propanoate to yield N-formimidoyl-L-glutamate. It is the third step in the universal histidine degradation pathway. In Porphyromonas gingivalis (strain ATCC 33277 / DSM 20709 / CIP 103683 / JCM 12257 / NCTC 11834 / 2561), this protein is Imidazolonepropionase.